We begin with the raw amino-acid sequence, 250 residues long: Small ribosomal subunit protein uS3 (250 aa).

The 73-residue stretch at 39 to 111 (IRPLIKNHYP…KVQINIFEVK (73 aa)) folds into the KH type-2 domain.

This sequence belongs to the universal ribosomal protein uS3 family. As to quaternary structure, part of the 30S ribosomal subunit. Forms a tight complex with proteins S10 and S14.

Its function is as follows. Binds the lower part of the 30S subunit head. Binds mRNA in the 70S ribosome, positioning it for translation. The chain is Small ribosomal subunit protein uS3 from Ziziphus jujuba witches'-broom phytoplasma.